The chain runs to 287 residues: Elongation factor Ts (287 aa).

An involved in Mg(2+) ion dislocation from EF-Tu region spans residues 81 to 84 (TDFV).

It belongs to the EF-Ts family.

It localises to the cytoplasm. Associates with the EF-Tu.GDP complex and induces the exchange of GDP to GTP. It remains bound to the aminoacyl-tRNA.EF-Tu.GTP complex up to the GTP hydrolysis stage on the ribosome. The chain is Elongation factor Ts from Nitratidesulfovibrio vulgaris (strain ATCC 29579 / DSM 644 / CCUG 34227 / NCIMB 8303 / VKM B-1760 / Hildenborough) (Desulfovibrio vulgaris).